We begin with the raw amino-acid sequence, 137 residues long: Probable glycine cleavage system H protein 1 (137 aa).

The 83-residue stretch at 31 to 113 (VAVIGITDYA…YGEGWIFKLK (83 aa)) folds into the Lipoyl-binding domain. The residue at position 72 (lysine 72) is an N6-lipoyllysine.

The protein belongs to the GcvH family. The glycine cleavage system is composed of four proteins: P, T, L and H. Requires (R)-lipoate as cofactor.

Its function is as follows. The glycine cleavage system catalyzes the degradation of glycine. The H protein shuttles the methylamine group of glycine from the P protein to the T protein. The chain is Probable glycine cleavage system H protein 1 from Saccharolobus solfataricus (strain ATCC 35092 / DSM 1617 / JCM 11322 / P2) (Sulfolobus solfataricus).